Here is a 947-residue protein sequence, read N- to C-terminus: MDSVYIYQWLYANYEVRGYGIALNNTVVCVRVPNFKQVVYVECTDPQHDPRSTFTQHGFRVYETPRACSLYGAKGVGTYFAARVPNYNAMRDVQETQGPFKIHESRVSKTMEFTARAGLPTVGWIQVSQRCVVTRTVTMAAKEYMVPNWRTDVRPAPDIEGVPPAKIVYFDIEVKSDHENVFPSDRDDEVIFQIGLVLCSGTTVLRTDLLSLPGRDYDASVYQYATEGELLHAFIAYIREHEVVAVCGYNIMGFDIPYIIKRCARTSMLGTFKRIGWDSHRLAIEKTAGVGHAKMTYIQWEGVLTIDLMPIIMMDHKLDSYSLDYVANHFVKAGKDPIRPRDIFHAYNTGLMARVGRYCVKDTQLCKQLVDYLNTWVALCEMAGVCNTSIMQLFTQGQQVRVFAQIYRDCTPMDVVDKVYVIPDGGCDSDVVSPSSYTGAYVYEPVPGVYKNVIPMDFQSLYPSIIISKNICYSTLVDQGGEEYAWQEHEGCEHDPQYAKQHALGVEIGVLQCNMAALPRRATQERARMRERISEMKIQYASMTPSVVKCNVFSFRFTHAHEGVLPRVLRNLLESRARVRARIKTTDDPDIRAVLDKKQLAYKISANSVYGTMGTQRGYLPFMAGAMTTTYCGRKLIEKAAHLLKTVVGATIVYGDTDSCYIQLGHDRASLDELWQMAVNASDTVSAFFERPVRLEFEQCIYTKFIIFTKKRYVYRAFTRDGKQRTGSKGVMLSRRDSAMCARNTYAAIMSAILEGSADVPFIAVRMMHDMMIPGALQDDDFVLTKSVQDIGNGDDNNHGSYKVRNPQKAQAAATQRVAPDDAEGYAIALRQEMVKQMPAQAQLAERMRLQGRAVVSGARIEYVVLKHQYGVPEGALGARLLDFERWRDMKVAYPLDRLYYMKSVVNACDQLLVTAGYGPVCSKVYAAHLQLAYVHKQLMRRMMPTV.

The protein belongs to the DNA polymerase type-B family.

It catalyses the reaction DNA(n) + a 2'-deoxyribonucleoside 5'-triphosphate = DNA(n+1) + diphosphate. The chain is DNA polymerase from Red sea bream iridovirus (RSIV).